A 656-amino-acid polypeptide reads, in one-letter code: Leucine-rich repeat-containing protein 43 (656 aa).

Residues Met1–Ser13 show a composition bias toward acidic residues. A disordered region spans residues Met1–Gly25. LRR repeat units follow at residues Lys150–Pro170, Thr172–Pro193, Gly196–Tyr215, and Asn223–Leu244. Positions Asn258–Leu296 constitute an LRRCT domain. The tract at residues Leu512–Glu554 is disordered. The segment covering Gly517–Val544 has biased composition (basic and acidic residues).

In Homo sapiens (Human), this protein is Leucine-rich repeat-containing protein 43 (LRRC43).